A 228-amino-acid polypeptide reads, in one-letter code: Glucose-induced degradation protein 8-A homolog (228 aa).

In terms of domain architecture, LisH spans 25–57 (QRADMNRLIMNYLVTEGFKEAAEKFRMESGIEP). A CTLH domain is found at 63 to 120 (SLDERIKIREMVLKGQIQEAIALINSLHPELLDTNRYLYFHLQQQHLIELIRLRETEA).

It belongs to the GID8 family. Identified in the CTLH complex that contains at least MAEA, RMND5A (or alternatively its paralog RMND5B), GID8, WDR26, and RANBP9 and/or RANBP10. Interacts with CTNNB1.

Its function is as follows. Core component of the CTLH E3 ubiquitin-protein ligase complex that selectively accepts ubiquitin from UBE2H and mediates ubiquitination and subsequent proteasomal degradation of target proteins. Acts as a positive regulator of Wnt signaling pathway by promoting beta-catenin (CTNNB1) nuclear accumulation. Required for normal Wnt signaling and normal dorsoventral patterning during embryogenesis. The protein is Glucose-induced degradation protein 8-A homolog (gid8a) of Danio rerio (Zebrafish).